We begin with the raw amino-acid sequence, 170 residues long: Adenine phosphoribosyltransferase (170 aa).

It belongs to the purine/pyrimidine phosphoribosyltransferase family. As to quaternary structure, homodimer.

The protein localises to the cytoplasm. The enzyme catalyses AMP + diphosphate = 5-phospho-alpha-D-ribose 1-diphosphate + adenine. It functions in the pathway purine metabolism; AMP biosynthesis via salvage pathway; AMP from adenine: step 1/1. In terms of biological role, catalyzes a salvage reaction resulting in the formation of AMP, that is energically less costly than de novo synthesis. The chain is Adenine phosphoribosyltransferase from Mycoplasmopsis agalactiae (strain NCTC 10123 / CIP 59.7 / PG2) (Mycoplasma agalactiae).